A 416-amino-acid polypeptide reads, in one-letter code: Acyl-coenzyme A amino acid N-acyltransferase 1 (416 aa).

Ser125 is subject to Phosphoserine. Active-site charge relay system residues include Ser235, Asp325, and His359. At Ser414 the chain carries Phosphoserine. A Microbody targeting signal motif is present at residues 414-416 (SKL).

It belongs to the C/M/P thioester hydrolase family. Expressed mainly in liver and kidney with low levels in adrenal and little or no expression in other tissues.

It is found in the peroxisome. It catalyses the reaction tetracosanoyl-CoA + taurine = N-tetracosanoyl-taurine + CoA + H(+). The enzyme catalyses eicosanoyl-CoA + taurine = N-eicosanoyl-taurine + CoA + H(+). It carries out the reaction taurine + octadecanoyl-CoA = N-octadecanoyl-taurine + CoA + H(+). The catalysed reaction is taurine + hexadecanoyl-CoA = N-hexadecanoyl-taurine + CoA + H(+). It catalyses the reaction tetradecanoyl-CoA + taurine = N-tetradecanoyl-taurine + CoA + H(+). The enzyme catalyses dodecanoyl-CoA + taurine = N-dodecanoyl-taurine + CoA + H(+). Functionally, acyltransferase which efficiently conjugates very long-chain and long-chain fatty acids to taurine. Shows no conjugation activity in the presence of glycine. The polypeptide is Acyl-coenzyme A amino acid N-acyltransferase 1 (Mus musculus (Mouse)).